Here is a 1941-residue protein sequence, read N- to C-terminus: Myosin-7B (1941 aa).

Positions 30–80 (DGKKRVWVPDEQDAYVEAEVKTEATGGKVTVETKDQKVLTVRETEMQPMNP) constitute a Myosin N-terminal SH3-like domain. Positions 84–785 (DLLEDMAMMT…LLGILEELRD (702 aa)) constitute a Myosin motor domain. ATP is bound at residue 177 to 184 (GESGAGKT). 2 actin-binding regions span residues 662–684 (LNKL…VPNE) and 764–778 (QFGH…GLLG). One can recognise an IQ domain in the interval 788–817 (LAKVLTLLQARSRGRLMRLEYQRMLGGRDA). Positions 846–1935 (LLRSAQAEEE…KLRARSRDAL (1090 aa)) form a coiled coil. The segment at 1887-1941 (RQFEEAEQQASTNLAKYRKAQHELDDAEERADMAETQANKLRARSRDALGPKHKE) is disordered. The span at 1930-1941 (RSRDALGPKHKE) shows a compositional bias: basic and acidic residues.

It belongs to the TRAFAC class myosin-kinesin ATPase superfamily. Myosin family. As to quaternary structure, muscle myosin is a hexameric protein that consists of 2 heavy chain subunits (MHC), 2 alkali light chain subunits (MLC) and 2 regulatory light chain subunits (MLC-2).

Its subcellular location is the membrane. In terms of biological role, involved in muscle contraction. The sequence is that of Myosin-7B (Myh7b) from Mus musculus (Mouse).